A 456-amino-acid polypeptide reads, in one-letter code: Probable glycine dehydrogenase (decarboxylating) subunit 1 (456 aa).

Belongs to the GcvP family. N-terminal subunit subfamily. The glycine cleavage system is composed of four proteins: P, T, L and H. In this organism, the P 'protein' is a heterodimer of two subunits.

It carries out the reaction N(6)-[(R)-lipoyl]-L-lysyl-[glycine-cleavage complex H protein] + glycine + H(+) = N(6)-[(R)-S(8)-aminomethyldihydrolipoyl]-L-lysyl-[glycine-cleavage complex H protein] + CO2. The glycine cleavage system catalyzes the degradation of glycine. The P protein binds the alpha-amino group of glycine through its pyridoxal phosphate cofactor; CO(2) is released and the remaining methylamine moiety is then transferred to the lipoamide cofactor of the H protein. In Legionella pneumophila subsp. pneumophila (strain Philadelphia 1 / ATCC 33152 / DSM 7513), this protein is Probable glycine dehydrogenase (decarboxylating) subunit 1.